The primary structure comprises 281 residues: NADPH-dependent 7-cyano-7-deazaguanine reductase (281 aa).

88 to 90 (VES) contacts substrate. 90–91 (SK) provides a ligand contact to NADPH. The active-site Thioimide intermediate is the Cys-189. The active-site Proton donor is Asp-196. Residue 228 to 229 (HE) participates in substrate binding. 257–258 (RG) serves as a coordination point for NADPH.

Belongs to the GTP cyclohydrolase I family. QueF type 2 subfamily. Homodimer.

It is found in the cytoplasm. The enzyme catalyses 7-aminomethyl-7-carbaguanine + 2 NADP(+) = 7-cyano-7-deazaguanine + 2 NADPH + 3 H(+). It participates in tRNA modification; tRNA-queuosine biosynthesis. Its function is as follows. Catalyzes the NADPH-dependent reduction of 7-cyano-7-deazaguanine (preQ0) to 7-aminomethyl-7-deazaguanine (preQ1). The chain is NADPH-dependent 7-cyano-7-deazaguanine reductase from Klebsiella pneumoniae subsp. pneumoniae (strain ATCC 700721 / MGH 78578).